The sequence spans 56 residues: Frontoxin I (56 aa).

Intrachain disulfides connect Cys3–Cys22, Cys17–Cys39, Cys41–Cys52, and Cys53–Cys56.

This sequence belongs to the three-finger toxin family. Short-chain subfamily. Type I alpha-neurotoxin sub-subfamily. As to expression, expressed by the venom gland.

The protein resides in the secreted. Its function is as follows. Binds to muscle nicotinic acetylcholine receptor (nAChR) and inhibit acetylcholine from binding to the receptor, thereby impairing neuromuscular transmission. This chain is Frontoxin I, found in Micrurus frontalis (Coral snake).